A 117-amino-acid polypeptide reads, in one-letter code: Large ribosomal subunit protein bL20c (117 aa).

This sequence belongs to the bacterial ribosomal protein bL20 family.

The protein resides in the plastid. Its subcellular location is the chloroplast. In terms of biological role, binds directly to 23S ribosomal RNA and is necessary for the in vitro assembly process of the 50S ribosomal subunit. It is not involved in the protein synthesizing functions of that subunit. The protein is Large ribosomal subunit protein bL20c of Aethionema grandiflorum (Persian stone-cress).